The primary structure comprises 293 residues: N-acetylmannosamine kinase (293 aa).

ATP is bound by residues 5-12 and 133-140; these read AIDIGGTK and GVGGGLVI. Positions 157, 167, 169, and 174 each coordinate Zn(2+).

The protein belongs to the ROK (NagC/XylR) family. NanK subfamily. As to quaternary structure, homodimer.

The enzyme catalyses an N-acyl-D-mannosamine + ATP = an N-acyl-D-mannosamine 6-phosphate + ADP + H(+). It functions in the pathway amino-sugar metabolism; N-acetylneuraminate degradation; D-fructose 6-phosphate from N-acetylneuraminate: step 2/5. Catalyzes the phosphorylation of N-acetylmannosamine (ManNAc) to ManNAc-6-P. The chain is N-acetylmannosamine kinase from Vibrio vulnificus (strain CMCP6).